Here is a 251-residue protein sequence, read N- to C-terminus: Duodenase-1 (251 aa).

An N-terminal signal peptide occupies residues 1 to 17; that stretch reads MVLLLLLVALLSPTGEA. The propeptide occupies 18–19; it reads GK. Residues 20 to 242 enclose the Peptidase S1 domain; that stretch reads IIGGHEAKPH…SFLSWIHSTM (223 aa). A disulfide bridge connects residues Cys-48 and Cys-64. His-63 functions as the Charge relay system in the catalytic mechanism. N-linked (GlcNAc...) asparagine glycosylation is present at Asn-70. The Charge relay system role is filled by Asp-107. Cystine bridges form between Cys-141/Cys-207 and Cys-172/Cys-186. The active-site Charge relay system is Ser-201.

This sequence belongs to the peptidase S1 family. As to quaternary structure, monomer.

In terms of biological role, protease which has both trypsin-like and chymotrypsin-like activities. Shows a preferential cleavage after Lys, Arg, Tyr, Phe, and Leu residues. The chain is Duodenase-1 (BDMD1) from Bos taurus (Bovine).